We begin with the raw amino-acid sequence, 96 residues long: Mitochondrial import inner membrane translocase subunit Tim13-A (96 aa).

The short motif at 47-70 (CFRKCIGKPGGSLDNSEQKCIAMC) is the Twin CX3C motif element. Intrachain disulfides connect cysteine 47/cysteine 70 and cysteine 51/cysteine 66.

Belongs to the small Tim family. Heterohexamer; composed of 3 copies of TIMM8 (TIMM8A or TIMM8B) and 3 copies of TIMM13, named soluble 70 kDa complex. Associates with the TIM22 complex, whose core is composed of TIMM22.

Its subcellular location is the mitochondrion inner membrane. Its function is as follows. Mitochondrial intermembrane chaperone that participates in the import and insertion of some multi-pass transmembrane proteins into the mitochondrial inner membrane. Also required for the transfer of beta-barrel precursors from the TOM complex to the sorting and assembly machinery (SAM complex) of the outer membrane. Acts as a chaperone-like protein that protects the hydrophobic precursors from aggregation and guide them through the mitochondrial intermembrane space. The TIMM8-TIMM13 complex mediates the import of some proteins while the predominant TIMM9-TIMM10 70 kDa complex mediates the import of much more proteins. This Xenopus laevis (African clawed frog) protein is Mitochondrial import inner membrane translocase subunit Tim13-A (timm13-a).